Reading from the N-terminus, the 274-residue chain is Formamidopyrimidine-DNA glycosylase (274 aa).

P2 acts as the Schiff-base intermediate with DNA in catalysis. Residue E3 is the Proton donor of the active site. Catalysis depends on K60, which acts as the Proton donor; for beta-elimination activity. DNA contacts are provided by H93 and R112. The FPG-type zinc finger occupies 240–274; that stretch reads GVYGRKNEPCRQCGTDILKTVVGGRGTHFCPNCQL. R264 (proton donor; for delta-elimination activity) is an active-site residue.

The protein belongs to the FPG family. Monomer. The cofactor is Zn(2+).

It carries out the reaction Hydrolysis of DNA containing ring-opened 7-methylguanine residues, releasing 2,6-diamino-4-hydroxy-5-(N-methyl)formamidopyrimidine.. The enzyme catalyses 2'-deoxyribonucleotide-(2'-deoxyribose 5'-phosphate)-2'-deoxyribonucleotide-DNA = a 3'-end 2'-deoxyribonucleotide-(2,3-dehydro-2,3-deoxyribose 5'-phosphate)-DNA + a 5'-end 5'-phospho-2'-deoxyribonucleoside-DNA + H(+). Involved in base excision repair of DNA damaged by oxidation or by mutagenic agents. Acts as a DNA glycosylase that recognizes and removes damaged bases. Has a preference for oxidized purines, such as 7,8-dihydro-8-oxoguanine (8-oxoG). Has AP (apurinic/apyrimidinic) lyase activity and introduces nicks in the DNA strand. Cleaves the DNA backbone by beta-delta elimination to generate a single-strand break at the site of the removed base with both 3'- and 5'-phosphates. The chain is Formamidopyrimidine-DNA glycosylase (mutM) from Cytobacillus firmus (Bacillus firmus).